Consider the following 61-residue polypeptide: Defensin BmKDfsin2 (61 aa).

A signal peptide spans 1-24 (METIVLLFLLALVFCTLEMGMVEA). 3 cysteine pairs are disulfide-bonded: Cys28–Cys49, Cys35–Cys57, and Cys39–Cys59.

This sequence belongs to the invertebrate defensin family. Type 2 subfamily. As to expression, highly expressed in non-venom gland (hemolymph) and moderately expressed in venom gland.

The protein localises to the secreted. Antibacterial peptide active against Gram-positive bacteria, but not on Gram-negative bacteria. Also has weak blocking activity on Kv1.1/KCNA1, Kv1.2/KCNA2, Kv1.3/KCNA3, KCa3.1/KCNN4/IK, KCa2.3/KCNN3/SK3 and Kv11.1/KCNH2/ERG1 channels (tested at 1 uM). It inhibits potassium channel current by interacting with the pore region. The chain is Defensin BmKDfsin2 from Olivierus martensii (Manchurian scorpion).